A 240-amino-acid polypeptide reads, in one-letter code: Probable septum site-determining protein MinC (240 aa).

The protein belongs to the MinC family. In terms of assembly, interacts with MinD and FtsZ.

Functionally, cell division inhibitor that blocks the formation of polar Z ring septums. Rapidly oscillates between the poles of the cell to destabilize FtsZ filaments that have formed before they mature into polar Z rings. Prevents FtsZ polymerization. The chain is Probable septum site-determining protein MinC from Acinetobacter baumannii (strain AYE).